Consider the following 298-residue polypeptide: N-acetylmuramic acid 6-phosphate etherase (298 aa).

Residues 54–217 (TIKAMKQGGR…STTVMIGLGK (164 aa)) enclose the SIS domain. The active-site Proton donor is the Glu-82. The active site involves Glu-113.

Belongs to the GCKR-like family. MurNAc-6-P etherase subfamily. As to quaternary structure, homodimer.

It carries out the reaction N-acetyl-D-muramate 6-phosphate + H2O = N-acetyl-D-glucosamine 6-phosphate + (R)-lactate. The protein operates within amino-sugar metabolism; N-acetylmuramate degradation. In terms of biological role, specifically catalyzes the cleavage of the D-lactyl ether substituent of MurNAc 6-phosphate, producing GlcNAc 6-phosphate and D-lactate. The sequence is that of N-acetylmuramic acid 6-phosphate etherase from Halalkalibacterium halodurans (strain ATCC BAA-125 / DSM 18197 / FERM 7344 / JCM 9153 / C-125) (Bacillus halodurans).